Here is a 338-residue protein sequence, read N- to C-terminus: MIEIEKVCVDFTAGRGTPTRAVDNVSLHIAAGEIFGIVGTSGAGKSTLLRTLNALTRPSQGRVNVNGVEISALDGKALRQARQRIGMIFQHFNLMHTRTVAQNVAFSLKAAGWERSKIAPRVAEILTLVGLADKANRFPVQLSGGQKQRVGIARAIANHPDVLLCDEPTSALDLETSATILALLRQINAQLGITIVLITHEMNVIKSICDRVAVMSGGKVVESGEVFDVFAHPQHAFTQQLVSHTLNLTLPERLREHLPGQLLKILFIGDSAEQPVLSEVAIKFGVAVNILHGKIEYIGERALGILVVQLTAPHNPTAVAAAVEHIRQRTAQVEVIRG.

The ABC transporter domain occupies 2–242 (IEIEKVCVDF…PQHAFTQQLV (241 aa)). 39–46 (GTSGAGKS) is a binding site for ATP.

Belongs to the ABC transporter superfamily. Methionine importer (TC 3.A.1.24) family. As to quaternary structure, the complex is composed of two ATP-binding proteins (MetN), two transmembrane proteins (MetI) and a solute-binding protein (MetQ).

The protein localises to the cell inner membrane. It carries out the reaction L-methionine(out) + ATP + H2O = L-methionine(in) + ADP + phosphate + H(+). The catalysed reaction is D-methionine(out) + ATP + H2O = D-methionine(in) + ADP + phosphate + H(+). Functionally, part of the ABC transporter complex MetNIQ involved in methionine import. Responsible for energy coupling to the transport system. In Salmonella paratyphi A (strain ATCC 9150 / SARB42), this protein is Methionine import ATP-binding protein MetN 2.